A 951-amino-acid polypeptide reads, in one-letter code: UvrABC system protein A (951 aa).

33-40 contributes to the ATP binding site; it reads GLSGSGKS. The C4-type zinc-finger motif lies at 252 to 279; sequence CPICGFTVGELEPRLFSFNAPQGACPDC. ABC transporter domains are found at residues 309–587 and 607–935; these read WNPI…RKSL and GNGK…QYLK. ATP is bound at residue 639 to 646; the sequence is GVSGSGKS. The segment at 738–764 adopts a C4-type zinc-finger fold; it reads CEACHGDGILKIEMNFLPDVFVPCEVC.

The protein belongs to the ABC transporter superfamily. UvrA family. As to quaternary structure, forms a heterotetramer with UvrB during the search for lesions.

Its subcellular location is the cytoplasm. Functionally, the UvrABC repair system catalyzes the recognition and processing of DNA lesions. UvrA is an ATPase and a DNA-binding protein. A damage recognition complex composed of 2 UvrA and 2 UvrB subunits scans DNA for abnormalities. When the presence of a lesion has been verified by UvrB, the UvrA molecules dissociate. This Lactiplantibacillus plantarum (strain ATCC BAA-793 / NCIMB 8826 / WCFS1) (Lactobacillus plantarum) protein is UvrABC system protein A.